We begin with the raw amino-acid sequence, 95 residues long: Large ribosomal subunit protein bL27 (95 aa).

The propeptide occupies M1 to F9.

The protein belongs to the bacterial ribosomal protein bL27 family. The N-terminus is cleaved by ribosomal processing cysteine protease Prp.

This is Large ribosomal subunit protein bL27 from Lachnoclostridium phytofermentans (strain ATCC 700394 / DSM 18823 / ISDg) (Clostridium phytofermentans).